The following is a 235-amino-acid chain: Uridylate kinase (235 aa).

10 to 11 (GS) contributes to the ATP binding site. G45 is a binding site for UMP. ATP contacts are provided by G46 and R50. Residues D67 and 115–121 (VTPGQTT) contribute to the UMP site. ATP-binding residues include T141, Y147, and D150.

The protein belongs to the UMP kinase family. As to quaternary structure, homohexamer.

The protein localises to the cytoplasm. It carries out the reaction UMP + ATP = UDP + ADP. Its pathway is pyrimidine metabolism; CTP biosynthesis via de novo pathway; UDP from UMP (UMPK route): step 1/1. Its activity is regulated as follows. Inhibited by UTP. Its function is as follows. Catalyzes the reversible phosphorylation of UMP to UDP. This Methanocorpusculum labreanum (strain ATCC 43576 / DSM 4855 / Z) protein is Uridylate kinase.